Here is a 297-residue protein sequence, read N- to C-terminus: Mitochondrial substrate carrier family protein P (297 aa).

Solcar repeat units lie at residues lysine 12 to histidine 98, serine 104 to isoleucine 189, and isoleucine 201 to phenylalanine 293. A run of 6 helical transmembrane segments spans residues tryptophan 15–leucine 35, glycine 66–alanine 86, phenylalanine 107–leucine 127, isoleucine 165–phenylalanine 185, leucine 207–valine 227, and isoleucine 262–isoleucine 282.

The protein belongs to the mitochondrial carrier (TC 2.A.29) family.

The protein resides in the mitochondrion inner membrane. In terms of biological role, mitochondrial solute carriers shuttle metabolites, nucleotides, and cofactors through the mitochondrial inner membrane. Required for the accumulation of coenzyme A in the mitochondrial matrix. In Dictyostelium discoideum (Social amoeba), this protein is Mitochondrial substrate carrier family protein P (mcfP).